A 67-amino-acid polypeptide reads, in one-letter code: Neurotoxin Os3 (67 aa).

In terms of domain architecture, LCN-type CS-alpha/beta spans Arg3–His67. 4 disulfide bridges follow: Cys13-Cys66, Cys17-Cys39, Cys24-Cys48, and Cys28-Cys50.

This sequence belongs to the long (4 C-C) scorpion toxin superfamily. Sodium channel inhibitor family. Alpha subfamily. In terms of tissue distribution, expressed by the venom gland.

Its subcellular location is the secreted. Binds to sodium channels (Nav) and inhibits the inactivation of the activated channels, thereby blocking neuronal transmission. This chain is Neurotoxin Os3, found in Orthochirus scrobiculosus (Central Asian scorpion).